A 167-amino-acid chain; its full sequence is Peptidyl-prolyl cis-trans isomerase-like 3 (167 aa).

A PPIase cyclophilin-type domain is found at 1–160 (MSVTLHTSHG…EPVRIENVTI (160 aa)).

This sequence belongs to the cyclophilin-type PPIase family. PPIL3 subfamily.

It carries out the reaction [protein]-peptidylproline (omega=180) = [protein]-peptidylproline (omega=0). Its function is as follows. PPIases accelerate the folding of proteins. It catalyzes the cis-trans isomerization of proline imidic peptide bonds in oligopeptides. This Gibberella zeae (strain ATCC MYA-4620 / CBS 123657 / FGSC 9075 / NRRL 31084 / PH-1) (Wheat head blight fungus) protein is Peptidyl-prolyl cis-trans isomerase-like 3 (CYP10).